We begin with the raw amino-acid sequence, 668 residues long: Patellin-5 (668 aa).

The interval 1-263 is disordered; the sequence is MSQDSATTTP…STTTSTVASR (263 aa). 4 stretches are compositionally biased toward basic and acidic residues: residues 55 to 68, 82 to 100, 107 to 125, and 132 to 150; these read ESNHTAEVVSEKVT, AAEDSEQTHEVTPETETAK, TAEDSEQTHEVTPEKETVK, and VAEDSEQTHEVTPETETVK. Positions 170 to 186 are enriched in polar residues; sequence TPETETSEADTSLLVTS. Positions 218–231 are enriched in acidic residues; it reads VEDWTEPELPDEAV. Pro residues predominate over residues 244 to 254; that stretch reads PEPQTPPPPPS. Position 290 is a phosphoserine (S290). In terms of domain architecture, CRAL-TRIO spans 377 to 552; it reads DENLGDDLDK…QYGGLSVDNC (176 aa). The region spanning 556–662 is the GOLD domain; it reads SDFTHDDIAT…KKMLIYRFKV (107 aa).

The protein belongs to the patellin family.

Its subcellular location is the membrane. The protein resides in the cytoplasm. Carrier protein that may be involved in membrane-trafficking events associated with cell plate formation during cytokinesis. Binds to some hydrophobic molecules such as phosphoinositides and promotes their transfer between the different cellular sites. This chain is Patellin-5 (PATL5), found in Arabidopsis thaliana (Mouse-ear cress).